The following is a 220-amino-acid chain: Histone H1B (220 aa).

Disordered regions lie at residues 1 to 45 (MTAT…PSAS) and 99 to 220 (QVKG…APKK). The segment covering 28-45 (KKVAGGAKAKKPSGPSAS) has biased composition (low complexity). Positions 40–113 (SGPSASELIV…GASGSFKLNK (74 aa)) constitute an H15 domain. Composition is skewed to basic residues over residues 122–134 (AAKK…KAKK), 141–151 (KAPKSPKKPKK), 158–196 (SPKK…KPKT), and 204–220 (KVAK…APKK).

It belongs to the histone H1/H5 family.

It is found in the nucleus. It localises to the chromosome. Functionally, histones H1 are necessary for the condensation of nucleosome chains into higher-order structures. The polypeptide is Histone H1B (Xenopus laevis (African clawed frog)).